Consider the following 134-residue polypeptide: Small ribosomal subunit protein bS6 (134 aa).

It belongs to the bacterial ribosomal protein bS6 family.

Binds together with bS18 to 16S ribosomal RNA. In Pelodictyon phaeoclathratiforme (strain DSM 5477 / BU-1), this protein is Small ribosomal subunit protein bS6.